The following is a 403-amino-acid chain: Argininosuccinate synthase (403 aa).

Residues 12 to 20 and alanine 39 contribute to the ATP site; that span reads AYSGGLDTS. Tyrosine 91 serves as a coordination point for L-citrulline. Position 121 (glycine 121) interacts with ATP. L-aspartate contacts are provided by threonine 123, asparagine 127, and aspartate 128. Asparagine 127 contacts L-citrulline. Positions 131, 180, 189, 265, and 277 each coordinate L-citrulline.

It belongs to the argininosuccinate synthase family. Type 1 subfamily. Homotetramer.

It is found in the cytoplasm. The enzyme catalyses L-citrulline + L-aspartate + ATP = 2-(N(omega)-L-arginino)succinate + AMP + diphosphate + H(+). It functions in the pathway amino-acid biosynthesis; L-arginine biosynthesis; L-arginine from L-ornithine and carbamoyl phosphate: step 2/3. This Buchnera aphidicola subsp. Acyrthosiphon pisum (strain 5A) protein is Argininosuccinate synthase.